Reading from the N-terminus, the 511-residue chain is Lysine--tRNA ligase (511 aa).

Residues Glu421 and Glu428 each coordinate Mg(2+).

This sequence belongs to the class-II aminoacyl-tRNA synthetase family. Homodimer. Requires Mg(2+) as cofactor.

Its subcellular location is the cytoplasm. The enzyme catalyses tRNA(Lys) + L-lysine + ATP = L-lysyl-tRNA(Lys) + AMP + diphosphate. This chain is Lysine--tRNA ligase, found in Herminiimonas arsenicoxydans.